Consider the following 389-residue polypeptide: Arrestin-C (389 aa).

The disordered stretch occupies residues 369-389 (AQQEPSGESQEALAAEGNEGS).

This sequence belongs to the arrestin family. In terms of assembly, homodimer; disulfide-linked in response to retinal illumination. Interacts with CXCR4; the interaction is dependent on the C-terminal phosphorylation of CXCR4 and modulates the calcium ion mobilization activity of CXCR4. Interacts with GPR84. As to expression, expressed in cone photoreceptors in the retina (at protein level).

Its subcellular location is the photoreceptor inner segment. It is found in the cell projection. The protein localises to the cilium. The protein resides in the photoreceptor outer segment. Its function is as follows. May play a role in an as yet undefined retina-specific signal transduction. Could bind to photoactivated-phosphorylated red/green opsins. This Bos taurus (Bovine) protein is Arrestin-C (ARR3).